Here is a 164-residue protein sequence, read N- to C-terminus: UPF0262 protein Saro_0143 (164 aa).

The protein belongs to the UPF0262 family.

This is UPF0262 protein Saro_0143 from Novosphingobium aromaticivorans (strain ATCC 700278 / DSM 12444 / CCUG 56034 / CIP 105152 / NBRC 16084 / F199).